Here is an 87-residue protein sequence, read N- to C-terminus: Retinal rod rhodopsin-sensitive cGMP 3',5'-cyclic phosphodiesterase subunit gamma (87 aa).

Met1 is subject to N-acetylmethionine. The span at 1-12 (MNLEPPKAEIRS) shows a compositional bias: basic and acidic residues. The segment at 1–55 (MNLEPPKAEIRSATRVMGGPVTPRKGPPKFKQRQTRQFKSKPPKKGVQGFGDDIP) is disordered. Positions 26–44 (GPPKFKQRQTRQFKSKPPK) are enriched in basic residues.

It belongs to the rod/cone cGMP-PDE gamma subunit family. As to quaternary structure, oligomer composed of two catalytic chains (alpha and beta), an inhibitory chain (gamma) and the delta chain.

The enzyme catalyses 3',5'-cyclic GMP + H2O = GMP + H(+). Functionally, participates in processes of transmission and amplification of the visual signal. cGMP-PDEs are the effector molecules in G-protein-mediated phototransduction in vertebrate rods and cones. The sequence is that of Retinal rod rhodopsin-sensitive cGMP 3',5'-cyclic phosphodiesterase subunit gamma (PDE6G) from Bos taurus (Bovine).